The sequence spans 252 residues: Putative hydro-lyase OB3382 (252 aa).

This sequence belongs to the D-glutamate cyclase family.

In Oceanobacillus iheyensis (strain DSM 14371 / CIP 107618 / JCM 11309 / KCTC 3954 / HTE831), this protein is Putative hydro-lyase OB3382.